Here is an 88-residue protein sequence, read N- to C-terminus: Cell division topological specificity factor (88 aa).

Belongs to the MinE family.

Prevents the cell division inhibition by proteins MinC and MinD at internal division sites while permitting inhibition at polar sites. This ensures cell division at the proper site by restricting the formation of a division septum at the midpoint of the long axis of the cell. In Aeromonas hydrophila subsp. hydrophila (strain ATCC 7966 / DSM 30187 / BCRC 13018 / CCUG 14551 / JCM 1027 / KCTC 2358 / NCIMB 9240 / NCTC 8049), this protein is Cell division topological specificity factor.